Here is a 523-residue protein sequence, read N- to C-terminus: uncharacterized protein (523 aa).

Residues 1–63 (MACVSTCLIL…NRHGIAVVKA (63 aa)) constitute a chloroplast transit peptide. The next 3 membrane-spanning stretches (helical) occupy residues 180–200 (VSFG…IIAL), 386–406 (ALVI…NTLL), and 423–443 (IYPL…IRWF).

It is found in the plastid. The protein localises to the chloroplast membrane. This is an uncharacterized protein from Arabidopsis thaliana (Mouse-ear cress).